The primary structure comprises 1345 residues: MLDVNAFDKLKIGLATADDIRGWSYGEVKKPETINYRTLKPEKDGLFGEQIFGPTRDWECACGKYKRVRFKGIVCERCGVEVTRSRVRRERMGHIELAAPVTHIWFFKGVPSRLGYLLGIAPKELEKVIYFASYMVTSVDEEQRHQDLPDLQDEFDHEVQNLERRRNNEIEERAKKLEADLAELEADGEVKGSAKTKLRNGAERDMAAIRQRYDDQIKRIAAVFDKFKSLKPGDMESDVDLWREMEDRYGDYFEGCMGAEAIKKRLQDFDLEAAAKELREEIETGTGQRKARALKRLKVVNAFLTTDNKPEAMVLDVIPVIPPDLRPMVQLDGGRFATSDLNDLYRRVINRNNRLKRLIELGAPEIMLNNEKRMLQEAVDSLFDNGRRGRPVTGASNRPLKSLSDMLKGKQGRFRQNLLGKRVDYSGRSVIVVGPSLRMHQCGLPKPMALELFKPFVIKRLVDLNYAQNMKSAKRLVDRGDSEVWGVLEEVISEHPVLLNRAPTLHRLGIQAFEPILVEGKAIHLPPLACAAFNADFDGDQMAVHLPLSAEAQAEARSLMMASDNILKPADGHTVTMPSQDMILGLYYLSTVIDGAKGQGRIFSSLEEAQMALDKHEIDMQAKVLIRLPQDFVLPKDWEPGEVQVIDPEPGSPDVVKEERFADGSVLFATSLGRILFNDTLPVDYPFINEQAPKGKLSKIVDDIATRYSTQQVAATLDALKDLGFTRAPWSGVTMAFSDIVAPPDREEIIKGYEAQAAKVNNQYDLGLLTEEERRQELINLWTECTDKVAEAMRENFHDDNNVNIMVQSGARGNWMQIRQIAGMRGLVANPKGEIIPRPVKSNYREGLSVLEYFISQHGARKGLADTALRTAESGYLTRRLVDVSQEIIVREEDCGTTHGLPMTVAERDENGNLVLVKAADGGPYSRLLAQDVLDPADGKTVLYHAGDALSMDVLNDLVAHGVEQVIGRSVLTCESKRGVCAKCYGWSLATNKLVDVGEAVGIVAAQSIGEPGTQLTLRSFHSGGVASASDITQGLPRVTELFEARTPKGEAPISEFAGTIKVQDTERGREVILQPDDDSLEPITYQVTRRAPMLVKDGQHVDPGTQLVEGSVDPKKILRILGPRAAQMNIVNEVHDVYRSQGVDIHDKHIEVIVHQMLRRVTVIDSGDTDLLPGELVDRARFREQNKKTVAAGGRPAAGRPELMGITKASLATDSWLSAASFQETTRVLTEAALNEKEDDLKGLKENVIIGKLIPAGTGLARYRNATVEPDKAIRDTIYPNFGLGDGSLGGDLSDGDLGDVDFSNIDFGDLKLGDDFNPDDFLDDNDNPVDFGDEFRIDPDELK.

Positions 60, 62, 75, and 78 each coordinate Zn(2+). Mg(2+) contacts are provided by aspartate 536, aspartate 538, and aspartate 540. The Zn(2+) site is built by cysteine 895, cysteine 974, cysteine 981, and cysteine 984. Residues 1325 to 1345 (DDNDNPVDFGDEFRIDPDELK) are disordered. A compositionally biased stretch (basic and acidic residues) spans 1335–1345 (DEFRIDPDELK).

Belongs to the RNA polymerase beta' chain family. In terms of assembly, the RNAP catalytic core consists of 2 alpha, 1 beta, 1 beta' and 1 omega subunit. When a sigma factor is associated with the core the holoenzyme is formed, which can initiate transcription. It depends on Mg(2+) as a cofactor. Zn(2+) serves as cofactor.

The enzyme catalyses RNA(n) + a ribonucleoside 5'-triphosphate = RNA(n+1) + diphosphate. DNA-dependent RNA polymerase catalyzes the transcription of DNA into RNA using the four ribonucleoside triphosphates as substrates. The chain is DNA-directed RNA polymerase subunit beta' from Bifidobacterium animalis subsp. lactis (strain AD011).